The sequence spans 1571 residues: Phosphatidylinositol 3-kinase 1 (1571 aa).

Positions 1–73 are enriched in low complexity; sequence MNSIESSSND…NNDNNNNNNN (73 aa). 3 disordered regions span residues 1-119, 157-195, and 283-430; these read MNSI…HVNN, GYDVNSNNNNNNGGGSSSGSSSGGSDESASNQPIIRTRN, and NSKL…IIKR. Residues 74–85 are compositionally biased toward basic and acidic residues; sequence IDKKRKDSKNKQ. Low complexity predominate over residues 101 to 119; the sequence is NSNDSNCSSGSSSGGHVNN. Residues 283 to 292 are compositionally biased toward basic and acidic residues; it reads NSKLDTEEKP. The segment covering 294-324 has biased composition (low complexity); that stretch reads TTTTTTTTTSTSISTSTPTTTTTTTTNTSTT. Residues 325–337 show a composition bias toward polar residues; the sequence is NDITIKPKTSPTK. 2 stretches are compositionally biased toward low complexity: residues 360 to 382 and 405 to 424; these read KVSTPKSNNTSKKTSSDTTPTGK and NNTNNTSSNNNNNNNNNNNN. Residues 530–627 enclose the PI3K-ABD domain; that stretch reads IKTSFNILFL…IPKLKVIEKS (98 aa). Residues 700 to 789 form the PI3K-RBD domain; it reads GNKILISIFL…GTKPQLTLIQ (90 aa). The region spanning 851–1020 is the C2 PI3K-type domain; that stretch reads IKKPFRVKVM…GLTLEFEEFN (170 aa). One can recognise a PIK helical domain in the interval 1040 to 1216; sequence QPPTNINSNE…GILLESYLYA (177 aa). In terms of domain architecture, PI3K/PI4K catalytic spans 1280-1558; sequence IINKSKYMDS…LIHESLATKT (279 aa). Residues 1286 to 1292 form a G-loop region; the sequence is YMDSKKL. Residues 1424 to 1432 form a catalytic loop region; the sequence is GIGDRHNDN. Residues 1443 to 1469 are activation loop; the sequence is HIDFGHFLGNYKKKFGFKRERAPFVFT.

The protein belongs to the PI3/PI4-kinase family.

The enzyme catalyses a 1,2-diacyl-sn-glycero-3-phospho-(1D-myo-inositol) + ATP = a 1,2-diacyl-sn-glycero-3-phospho-(1D-myo-inositol-3-phosphate) + ADP + H(+). The chain is Phosphatidylinositol 3-kinase 1 (pikA) from Dictyostelium discoideum (Social amoeba).